The chain runs to 318 residues: Methionyl-tRNA formyltransferase (318 aa).

A (6S)-5,6,7,8-tetrahydrofolate-binding site is contributed by 110-113; the sequence is SLLP.

This sequence belongs to the Fmt family.

The enzyme catalyses L-methionyl-tRNA(fMet) + (6R)-10-formyltetrahydrofolate = N-formyl-L-methionyl-tRNA(fMet) + (6S)-5,6,7,8-tetrahydrofolate + H(+). In terms of biological role, attaches a formyl group to the free amino group of methionyl-tRNA(fMet). The formyl group appears to play a dual role in the initiator identity of N-formylmethionyl-tRNA by promoting its recognition by IF2 and preventing the misappropriation of this tRNA by the elongation apparatus. This is Methionyl-tRNA formyltransferase from Latilactobacillus sakei subsp. sakei (strain 23K) (Lactobacillus sakei subsp. sakei).